The following is an 87-amino-acid chain: Cx9C motif-containing protein 4, mitochondrial (87 aa).

Residues 9–51 (ENACKPFACAIQDCLIENGYNESKCTKAIDNLYKCCKQFYEEN) enclose the CHCH domain. 2 consecutive short sequence motifs (cx9C motif) follow at residues 12-22 (CKPFACAIQDC) and 33-43 (CTKAIDNLYKC). Cystine bridges form between Cys-12-Cys-43 and Cys-22-Cys-33.

The protein belongs to the CMC4 family.

It localises to the mitochondrion intermembrane space. This Clavispora lusitaniae (strain ATCC 42720) (Yeast) protein is Cx9C motif-containing protein 4, mitochondrial (CMC4).